Consider the following 291-residue polypeptide: F-box/kelch-repeat protein At5g38670 (291 aa).

The F-box domain maps to 5–51 (TNPNPSLPDDLILSCVARVSRLYYPALSLVSKSFRSLIASPELYKTR). 4 Kelch repeats span residues 46–91 (ELYK…VLDE), 92–140 (KIYV…RFDG), 142–187 (LHLV…WYTI), and 189–232 (KGDI…YGGK).

This Arabidopsis thaliana (Mouse-ear cress) protein is F-box/kelch-repeat protein At5g38670.